Consider the following 805-residue polypeptide: Phenylalanine--tRNA ligase beta subunit (805 aa).

The region spanning 40-162 (FKNPDYLQLG…NRDEFGDYLS (123 aa)) is the tRNA-binding domain. The B5 domain maps to 412-486 (AFNRKIYLNF…KILDLNKIKE (75 aa)). Mg(2+)-binding residues include Asp464, Asp470, Glu473, and Glu474.

Belongs to the phenylalanyl-tRNA synthetase beta subunit family. Type 1 subfamily. As to quaternary structure, tetramer of two alpha and two beta subunits. Mg(2+) is required as a cofactor.

It is found in the cytoplasm. The enzyme catalyses tRNA(Phe) + L-phenylalanine + ATP = L-phenylalanyl-tRNA(Phe) + AMP + diphosphate + H(+). The chain is Phenylalanine--tRNA ligase beta subunit (pheT) from Mycoplasma pneumoniae (strain ATCC 29342 / M129 / Subtype 1) (Mycoplasmoides pneumoniae).